Consider the following 476-residue polypeptide: Inosine-5'-monophosphate dehydrogenase (476 aa).

2 consecutive CBS domains span residues 93 to 151 (IIRD…VKDI) and 152 to 211 (MTKD…TRDE). NAD(+) contacts are provided by residues Asp242 and 292 to 294 (GIG). Positions 294 and 296 each coordinate K(+). Ser297 is a binding site for IMP. A K(+)-binding site is contributed by Cys299. The active-site Thioimidate intermediate is the Cys299. Residues 334–336 (DGG), 357–358 (GY), and 381–385 (YRGMG) each bind IMP. Residue Arg398 is the Proton acceptor of the active site. Glu408 is a binding site for IMP. A K(+)-binding site is contributed by Glu462.

This sequence belongs to the IMPDH/GMPR family. In terms of assembly, homotetramer. Requires K(+) as cofactor.

It carries out the reaction IMP + NAD(+) + H2O = XMP + NADH + H(+). It participates in purine metabolism; XMP biosynthesis via de novo pathway; XMP from IMP: step 1/1. With respect to regulation, mycophenolic acid (MPA) is a non-competitive inhibitor that prevents formation of the closed enzyme conformation by binding to the same site as the amobile flap. In contrast, mizoribine monophosphate (MZP) is a competitive inhibitor that induces the closed conformation. MPA is a potent inhibitor of mammalian IMPDHs but a poor inhibitor of the bacterial enzymes. MZP is a more potent inhibitor of bacterial IMPDH. Functionally, catalyzes the conversion of inosine 5'-phosphate (IMP) to xanthosine 5'-phosphate (XMP), the first committed and rate-limiting step in the de novo synthesis of guanine nucleotides, and therefore plays an important role in the regulation of cell growth. This chain is Inosine-5'-monophosphate dehydrogenase, found in Korarchaeum cryptofilum (strain OPF8).